A 599-amino-acid polypeptide reads, in one-letter code: Kelch repeat and BTB domain-containing protein 8 (599 aa).

Residues 1–25 form a disordered region; sequence MAASADLSKSSPTPNGIPSSDTAND. Over residues 7-25 the composition is skewed to polar residues; the sequence is LSKSSPTPNGIPSSDTAND. The 69-residue stretch at 49-117 folds into the BTB domain; it reads TDIVVEVDHG…AYTSRVILTE (69 aa). Residues 152 to 254 enclose the BACK domain; the sequence is SIGVFIFADH…MEDTFIEKIP (103 aa). Kelch repeat units lie at residues 334–388, 389–439, 441–479, 481–530, and 540–586; these read DIYI…YCCG, KMYA…EHKE, IYVLQGEFFLFYEPQKDYWGFLTPMTVPRIQGLAAVYKD, IYYI…LFQN, and QVTV…FECA.

The protein belongs to the KBTBD8 family. As to quaternary structure, component of the BCR(KBTBD8) E3 ubiquitin ligase complex, at least composed of CUL3, KBTBD8 and RBX1.

The protein resides in the cytoplasm. The protein localises to the cytoskeleton. It localises to the spindle. Its subcellular location is the golgi apparatus. Functionally, substrate-specific adapter of a BCR (BTB-CUL3-RBX1) E3 ubiquitin ligase complex that acts as a regulator of neural crest specification. The BCR(KBTBD8) complex acts by mediating monoubiquitination of NOLC1 and TCOF1: monoubiquitination promotes the formation of a NOLC1-TCOF1 complex that acts as a platform to connect RNA polymerase I with enzymes responsible for ribosomal processing and modification, leading to remodel the translational program of differentiating cells in favor of neural crest specification. In Mus musculus (Mouse), this protein is Kelch repeat and BTB domain-containing protein 8 (Kbtbd8).